Here is a 263-residue protein sequence, read N- to C-terminus: Endonuclease 8 (263 aa).

Residue Pro-2 is the Schiff-base intermediate with DNA of the active site. The Proton donor role is filled by Glu-3. The active-site Proton donor; for beta-elimination activity is the Lys-53. Residues Gln-70, Arg-125, and Asn-169 each coordinate DNA. The FPG-type zinc finger occupies 229-263 (KVFHRDGELCERCGGIIEKTTLSSRPFYWCPGCQH). The active-site Proton donor; for delta-elimination activity is the Arg-253.

The protein belongs to the FPG family. It depends on Zn(2+) as a cofactor.

The catalysed reaction is 2'-deoxyribonucleotide-(2'-deoxyribose 5'-phosphate)-2'-deoxyribonucleotide-DNA = a 3'-end 2'-deoxyribonucleotide-(2,3-dehydro-2,3-deoxyribose 5'-phosphate)-DNA + a 5'-end 5'-phospho-2'-deoxyribonucleoside-DNA + H(+). Involved in base excision repair of DNA damaged by oxidation or by mutagenic agents. Acts as a DNA glycosylase that recognizes and removes damaged bases. Has a preference for oxidized pyrimidines, such as thymine glycol, 5,6-dihydrouracil and 5,6-dihydrothymine. Has AP (apurinic/apyrimidinic) lyase activity and introduces nicks in the DNA strand. Cleaves the DNA backbone by beta-delta elimination to generate a single-strand break at the site of the removed base with both 3'- and 5'-phosphates. This chain is Endonuclease 8, found in Escherichia coli (strain 55989 / EAEC).